Here is a 289-residue protein sequence, read N- to C-terminus: Bis(5'-nucleosyl)-tetraphosphatase, symmetrical (289 aa).

This sequence belongs to the Ap4A hydrolase family.

The enzyme catalyses P(1),P(4)-bis(5'-adenosyl) tetraphosphate + H2O = 2 ADP + 2 H(+). Its function is as follows. Hydrolyzes diadenosine 5',5'''-P1,P4-tetraphosphate to yield ADP. In Yersinia pseudotuberculosis serotype O:3 (strain YPIII), this protein is Bis(5'-nucleosyl)-tetraphosphatase, symmetrical.